We begin with the raw amino-acid sequence, 128 residues long: Glycine cleavage system H protein (128 aa).

The Lipoyl-binding domain maps to 25–107 (TVRVGITDFA…YEGGWLFEIT (83 aa)). K66 carries the N6-lipoyllysine modification.

The protein belongs to the GcvH family. The glycine cleavage system is composed of four proteins: P, T, L and H. (R)-lipoate serves as cofactor.

Functionally, the glycine cleavage system catalyzes the degradation of glycine. The H protein shuttles the methylamine group of glycine from the P protein to the T protein. This is Glycine cleavage system H protein from Micrococcus luteus (strain ATCC 4698 / DSM 20030 / JCM 1464 / CCM 169 / CCUG 5858 / IAM 1056 / NBRC 3333 / NCIMB 9278 / NCTC 2665 / VKM Ac-2230) (Micrococcus lysodeikticus).